We begin with the raw amino-acid sequence, 213 residues long: Thiamine-phosphate synthase (213 aa).

Residues 38–42 (QLREK) and Asn73 each bind 4-amino-2-methyl-5-(diphosphooxymethyl)pyrimidine. Residues Asp74 and Asp93 each contribute to the Mg(2+) site. 4-amino-2-methyl-5-(diphosphooxymethyl)pyrimidine is bound at residue Ser111. 137 to 139 (TTS) is a 2-[(2R,5Z)-2-carboxy-4-methylthiazol-5(2H)-ylidene]ethyl phosphate binding site. Residue Lys140 participates in 4-amino-2-methyl-5-(diphosphooxymethyl)pyrimidine binding. Residues Gly169 and 189–190 (IS) each bind 2-[(2R,5Z)-2-carboxy-4-methylthiazol-5(2H)-ylidene]ethyl phosphate.

It belongs to the thiamine-phosphate synthase family. The cofactor is Mg(2+).

It carries out the reaction 2-[(2R,5Z)-2-carboxy-4-methylthiazol-5(2H)-ylidene]ethyl phosphate + 4-amino-2-methyl-5-(diphosphooxymethyl)pyrimidine + 2 H(+) = thiamine phosphate + CO2 + diphosphate. The catalysed reaction is 2-(2-carboxy-4-methylthiazol-5-yl)ethyl phosphate + 4-amino-2-methyl-5-(diphosphooxymethyl)pyrimidine + 2 H(+) = thiamine phosphate + CO2 + diphosphate. It catalyses the reaction 4-methyl-5-(2-phosphooxyethyl)-thiazole + 4-amino-2-methyl-5-(diphosphooxymethyl)pyrimidine + H(+) = thiamine phosphate + diphosphate. It participates in cofactor biosynthesis; thiamine diphosphate biosynthesis; thiamine phosphate from 4-amino-2-methyl-5-diphosphomethylpyrimidine and 4-methyl-5-(2-phosphoethyl)-thiazole: step 1/1. In terms of biological role, condenses 4-methyl-5-(beta-hydroxyethyl)thiazole monophosphate (THZ-P) and 2-methyl-4-amino-5-hydroxymethyl pyrimidine pyrophosphate (HMP-PP) to form thiamine monophosphate (TMP). The sequence is that of Thiamine-phosphate synthase from Lysinibacillus sphaericus (strain C3-41).